We begin with the raw amino-acid sequence, 132 residues long: 3-aminoacrylate deaminase RutC (132 aa).

Belongs to the RutC family.

It catalyses the reaction (Z)-3-aminoacrylate + H2O + H(+) = 3-oxopropanoate + NH4(+). Its function is as follows. Involved in pyrimidine catabolism. Catalyzes the deamination of 3-aminoacrylate to malonic semialdehyde, a reaction that can also occur spontaneously. RutC may facilitate the reaction and modulate the metabolic fitness, rather than catalyzing essential functions. The chain is 3-aminoacrylate deaminase RutC from Cronobacter sakazakii (strain ATCC BAA-894) (Enterobacter sakazakii).